A 67-amino-acid polypeptide reads, in one-letter code: DNA-directed RNA polymerase subunit omega (67 aa).

Belongs to the RNA polymerase subunit omega family. The RNAP catalytic core consists of 2 alpha, 1 beta, 1 beta' and 1 omega subunit. When a sigma factor is associated with the core the holoenzyme is formed, which can initiate transcription.

It carries out the reaction RNA(n) + a ribonucleoside 5'-triphosphate = RNA(n+1) + diphosphate. Functionally, promotes RNA polymerase assembly. Latches the N- and C-terminal regions of the beta' subunit thereby facilitating its interaction with the beta and alpha subunits. The protein is DNA-directed RNA polymerase subunit omega of Nitrosomonas eutropha (strain DSM 101675 / C91 / Nm57).